The following is a 100-amino-acid chain: Noncompact myelin-associated protein (100 aa).

The Extracellular portion of the chain corresponds to 1-28 (MTTATTLGDAVFSLNMTRGEDILYKSSG). Residues 29 to 49 (AIVAAIVVVVVIIVTLVLILL) form a helical membrane-spanning segment. The Cytoplasmic portion of the chain corresponds to 50-100 (KMYNRRMRTRRELEPKSPKPPVPPALDPNSNGSQQPAAVTSDPADVPVETR). The segment at 58-100 (TRRELEPKSPKPPVPPALDPNSNGSQQPAAVTSDPADVPVETR) is disordered. The span at 77 to 87 (PNSNGSQQPAA) shows a compositional bias: polar residues.

Post-translationally, glycosylated. Expressed in the peripheral nervous system Schwann cells (at protein level).

The protein localises to the cell membrane. Plays a role in myelin formation. The chain is Noncompact myelin-associated protein (Ncmap) from Rattus norvegicus (Rat).